The chain runs to 933 residues: Progesterone receptor (933 aa).

The segment at 1-164 is AF3; mediates transcriptional activation; that stretch reads MTELKAKGPR…PATQGVLSPL (164 aa). The segment at 1 to 256 is disordered; sequence MTELKAKGPR…AAAGGGAAAV (256 aa). The tract at residues 1-566 is modulating, Pro-Rich; sequence MTELKAKGPR…YSFESLPQKI (566 aa). Phosphoserine is present on S20. An LXXL motif 1 motif is present at residues 55–59; that stretch reads LDGLL. S81 is modified (phosphoserine). Positions 115 to 119 match the LXXL motif 2 motif; the sequence is LDTLL. 2 positions are modified to phosphoserine: S130 and S162. Residues 165 to 305 form a mediates transcriptional transrepression region; sequence MSRSGCKAGD…LATTMMDFIH (141 aa). A Nuclear localization signal motif is present at residues 183–187; that stretch reads KVLPR. Residues S190 and S213 each carry the phosphoserine modification. The span at 220–231 shows a compositional bias: acidic residues; that stretch reads EVEEEDGSESEE. Positions 232 to 246 are enriched in low complexity; that stretch reads SAGPLLKGKPRALGG. Position 294 is a phosphoserine; by MAPK1 (S294). The span at 335–356 shows a compositional bias: low complexity; sequence AXSAFAPPRSSPSASSTPVAVG. Residues 335–378 form a disordered region; sequence AXSAFAPPRSSPSASSTPVAVGDFPDCAYPPDAEPKDDAYPLYS. Phosphoserine; by MAPK is present on S345. A Glycyl lysine isopeptide (Lys-Gly) (interchain with G-Cter in SUMO); alternate cross-link involves residue K388. K388 is covalently cross-linked (Glycyl lysine isopeptide (Lys-Gly) (interchain with G-Cter in ubiquitin); alternate). S400 is modified (phosphoserine; by CDK2). The segment at 415 to 452 is disordered; it reads PDFPLGPPPPLPPRAPPSRPGEAAVTAAPASASVSSAS. Residues 418–433 are compositionally biased toward pro residues; sequence PLGPPPPLPPRAPPSR. A compositionally biased stretch (low complexity) spans 434–452; it reads PGEAAVTAAPASASVSSAS. The tract at residues 456–546 is AF1; mediates transcriptional activation; the sequence is STLECILYKA…VYPPYLNYLR (91 aa). K531 is covalently cross-linked (Glycyl lysine isopeptide (Lys-Gly) (interchain with G-Cter in SUMO)). 2 consecutive NR C4-type zinc fingers follow at residues 567–587 and 603–627; these read CLIC…CGSC and CAGR…LRKC. Residues 567–639 constitute a DNA-binding region (nuclear receptor); it reads CLICGDEASG…AGMVLGGRKF (73 aa). Phosphoserine is present on S676. In terms of domain architecture, NR LBD spans 679–913; sequence QDIQLIPPLI…EFPEMMSEVI (235 aa). The AF2; mediates transcriptional activation stretch occupies residues 687 to 933; the sequence is LINLLMSIEP…MVKPLLFHKK (247 aa). R766 lines the progesterone pocket.

It belongs to the nuclear hormone receptor family. As to quaternary structure, interacts with SMARD1 and UNC45A. Interacts with CUEDC2; the interaction promotes ubiquitination, decreases sumoylation, and represses transcriptional activity. Interacts with PIAS3; the interaction promotes sumoylation of PR in a hormone-dependent manner, inhibits DNA-binding, and alters nuclear export. Interacts with SP1; the interaction requires ligand-induced phosphorylation on Ser-345 by ERK1/2-MAPK. Interacts with PRMT2. Interacts with NCOA2 and NCOA1. Interacts with KLF9. Interacts with GTF2B. Post-translationally, phosphorylated on multiple serine sites. Several of these sites are hormone-dependent. Phosphorylation on Ser-294 is highly hormone-dependent and modulates ubiquitination and sumoylation on Lys-388. Phosphorylation on Ser-102 and Ser-345 requires induction by hormone. Basal phosphorylation on Ser-81, Ser-162, Ser-190 and Ser-400 is increased in response to progesterone and can be phosphorylated in vitro by the CDK2-A1 complex. Increased levels of phosphorylation on Ser-400 also in the presence of EGF, heregulin, IGF, PMA and FBS. Phosphorylation at this site by CDK2 is ligand-independent, and increases nuclear translocation and transcriptional activity. Phosphorylation at Ser-162 and Ser-294, but not at Ser-190, is impaired during the G(2)/M phase of the cell cycle. Phosphorylation on Ser-345 by ERK1/2 MAPK is required for interaction with SP1. In terms of processing, sumoylation is hormone-dependent and represses transcriptional activity. Sumoylation on all three sites is enhanced by PIAS3. Desumoylated by SENP1. Sumoylation on Lys-388, the main site of sumoylation, is repressed by ubiquitination on the same site, and modulated by phosphorylation at Ser-294. Ubiquitination is hormone-dependent and represses sumoylation on the same site. Promoted by MAPK-mediated phosphorylation on Ser-294. Ubiquitinated by UBR5, leading to its degradation: UBR5 specifically recognizes and binds ligand-bound PGR when it is not associated with coactivators (NCOAs). In presence of NCOAs, the UBR5-degron is not accessible, preventing its ubiquitination and degradation. Post-translationally, palmitoylated by ZDHHC7 and ZDHHC21. Palmitoylation is required for plasma membrane targeting and for rapid intracellular signaling via ERK and AKT kinases and cAMP generation.

Its subcellular location is the nucleus. It is found in the cytoplasm. Its function is as follows. The steroid hormones and their receptors are involved in the regulation of eukaryotic gene expression and affect cellular proliferation and differentiation in target tissues. Transcriptional activator of several progesteron-dependent promoters in a variety of cell types. Involved in activation of SRC-dependent MAPK signaling on hormone stimulation. The chain is Progesterone receptor (PGR) from Pan troglodytes (Chimpanzee).